A 347-amino-acid polypeptide reads, in one-letter code: Aurora kinase A- and ninein-interacting protein (347 aa).

Residues 182–347 (QREAKRKREG…DSEGNRVIRH (166 aa)) are interaction with AURKA. An interaction with RBBP8/CtIP region spans residues 273 to 347 (RDSWSQLFTE…DSEGNRVIRH (75 aa)). Serine 284 is subject to Phosphoserine. Positions 301–322 (VTNARNQGSGQFPDSPQAQGQD) are enriched in polar residues. A disordered region spans residues 301 to 325 (VTNARNQGSGQFPDSPQAQGQDGPT).

This sequence belongs to the AUNIP family. As to quaternary structure, interacts (via C-terminus) with AURKA (via C-terminus). Interacts (via N-terminus) with NIN; this interaction blocks NIN phosphorylation by both AURKA and GSK3B. Identified in a complex with NIN and AURKA. Interacts with RBBP8/CtIP.

It is found in the nucleus. Its subcellular location is the chromosome. The protein localises to the cytoplasm. It localises to the cytoskeleton. The protein resides in the microtubule organizing center. It is found in the centrosome. Its subcellular location is the spindle pole. In terms of biological role, DNA-binding protein that accumulates at DNA double-strand breaks (DSBs) following DNA damage and promotes DNA resection and homologous recombination. Serves as a sensor of DNA damage: binds DNA with a strong preference for DNA substrates that mimic structures generated at stalled replication forks, and anchors RBBP8/CtIP to DSB sites to promote DNA end resection and ensuing homologous recombination repair. Inhibits non-homologous end joining (NHEJ). Required for the dynamic movement of AURKA at the centrosomes and spindle apparatus during the cell cycle. The sequence is that of Aurora kinase A- and ninein-interacting protein from Rattus norvegicus (Rat).